We begin with the raw amino-acid sequence, 655 residues long: p-hydroxybenzoic acid efflux pump subunit AaeB (655 aa).

At 1-12 (MGIFSIANQHIR) the chain is on the periplasmic side. Residues 13–33 (FAVKLATAIVLALFVGFHFQL) form a helical membrane-spanning segment. The Cytoplasmic segment spans residues 34-37 (ETPR). The chain crosses the membrane as a helical span at residues 38 to 58 (WAVLTAAIVAAGPAFAAGGEP). At 59-68 (YSGAIRYRGF) the chain is on the periplasmic side. A helical membrane pass occupies residues 69-89 (LRIIGTFIGCIAGLVIIIAMI). Topologically, residues 90–92 (RAP) are cytoplasmic. The chain crosses the membrane as a helical span at residues 93 to 113 (LLMILVCCIWAGFCTWISSLV). The Periplasmic portion of the chain corresponds to 114–120 (RIENSYA). The chain crosses the membrane as a helical span at residues 121–141 (WGLAGYTALIIVITIQPEPLL). Residues 142-151 (TPQFAVERCS) are Cytoplasmic-facing. A helical transmembrane segment spans residues 152 to 172 (EIVIGIVCAIMADLLFSPRSI). Topologically, residues 173–369 (KQEVDRELES…RTTLSCILGT (197 aa)) are periplasmic. Residues 370–390 (LFWLWTGWTSGSGAMVMIAVV) traverse the membrane as a helical segment. The Cytoplasmic portion of the chain corresponds to 391 to 406 (TSLAMRLPNPRMVAID). Residues 407–427 (FIYGTLAALPLGLLYFLVIIP) traverse the membrane as a helical segment. At 428-430 (NTQ) the chain is on the periplasmic side. The chain crosses the membrane as a helical span at residues 431 to 451 (QSMLLLCISLAVLGFFLGIEV). Residues 452 to 458 (QKRRLGS) lie on the Cytoplasmic side of the membrane. The chain crosses the membrane as a helical span at residues 459 to 479 (MGALASTINIIVLDNPMTFHF). The Periplasmic segment spans residues 480-481 (SQ). A helical transmembrane segment spans residues 482–502 (FLDSALGQIVGCVLAFTVILL). Residues 503–655 (VRDKSRDRTG…HKYQHALTDS (153 aa)) are Cytoplasmic-facing.

It belongs to the aromatic acid exporter ArAE (TC 2.A.85) family.

The protein resides in the cell inner membrane. Its function is as follows. Forms an efflux pump with AaeA. Could function as a metabolic relief valve, allowing to eliminate certain compounds when they accumulate to high levels in the cell. This is p-hydroxybenzoic acid efflux pump subunit AaeB from Escherichia coli O6:H1 (strain CFT073 / ATCC 700928 / UPEC).